The primary structure comprises 140 residues: MAIERTFSIIKPDATERNLTGAINALIEKAGLRIVAQKRIRMTRDQAETFYAVHKARPFFGELVDFMISGPVVVQVLEGEGAILKYRDVMGATDPSKAAEGTIRKAHAKSIGENSVHGSDAPETAAIEIAQFFAGNEIVG.

ATP contacts are provided by Lys11, Phe59, Arg87, Thr93, Arg104, and Asn114. Catalysis depends on His117, which acts as the Pros-phosphohistidine intermediate.

This sequence belongs to the NDK family. As to quaternary structure, homotetramer. The cofactor is Mg(2+).

It localises to the cytoplasm. The catalysed reaction is a 2'-deoxyribonucleoside 5'-diphosphate + ATP = a 2'-deoxyribonucleoside 5'-triphosphate + ADP. The enzyme catalyses a ribonucleoside 5'-diphosphate + ATP = a ribonucleoside 5'-triphosphate + ADP. Major role in the synthesis of nucleoside triphosphates other than ATP. The ATP gamma phosphate is transferred to the NDP beta phosphate via a ping-pong mechanism, using a phosphorylated active-site intermediate. The polypeptide is Nucleoside diphosphate kinase (Bradyrhizobium sp. (strain ORS 278)).